The following is a 100-amino-acid chain: Class II hydrophobin FOXG_02746 (100 aa).

The signal sequence occupies residues 1–17; sequence MQFYTIVSLFLAGTAYA. Cystine bridges form between C29–C79, C40–C70, C41–C53, and C80–C92.

It belongs to the cerato-ulmin hydrophobin family. Homodimer. Homodimers further self-assemble to form highly ordered films at water-air interfaces through intermolecular interactions.

It localises to the secreted. It is found in the cell wall. Functionally, aerial growth, conidiation, and dispersal of filamentous fungi in the environment rely upon a capability of their secreting small amphipathic proteins called hydrophobins (HPBs) with low sequence identity. Class I can self-assemble into an outermost layer of rodlet bundles on aerial cell surfaces, conferring cellular hydrophobicity that supports fungal growth, development and dispersal; whereas Class II form highly ordered films at water-air interfaces through intermolecular interactions but contribute nothing to the rodlet structure. FOXG_02746 is a class II hydrophobin that is likely required for plant colonization. In Fusarium oxysporum f. sp. lycopersici (strain 4287 / CBS 123668 / FGSC 9935 / NRRL 34936) (Fusarium vascular wilt of tomato), this protein is Class II hydrophobin FOXG_02746.